Here is a 412-residue protein sequence, read N- to C-terminus: CinA-like protein (412 aa).

This sequence belongs to the CinA family.

This chain is CinA-like protein, found in Syntrophotalea carbinolica (strain DSM 2380 / NBRC 103641 / GraBd1) (Pelobacter carbinolicus).